The sequence spans 103 residues: Putative glutaredoxin-C12 (103 aa).

The 102-residue stretch at 1 to 102 folds into the Glutaredoxin domain; the sequence is MERVRDLASE…QMLKASNAIW (102 aa). Cys-21 and Cys-24 form a disulfide bridge.

Belongs to the glutaredoxin family. CC-type subfamily.

It is found in the cytoplasm. Functionally, has a glutathione-disulfide oxidoreductase activity in the presence of NADPH and glutathione reductase. Reduces low molecular weight disulfides and proteins. In Arabidopsis thaliana (Mouse-ear cress), this protein is Putative glutaredoxin-C12 (GRXC12).